The following is a 339-amino-acid chain: Anthranilate phosphoribosyltransferase (339 aa).

5-phospho-alpha-D-ribose 1-diphosphate-binding positions include Gly-79, Gly-82–Asp-83, Ser-87, Asn-89–Thr-92, Lys-107–Ser-115, and Ser-119. Gly-79 provides a ligand contact to anthranilate. Residue Ser-91 participates in Mg(2+) binding. Position 110 (Asn-110) interacts with anthranilate. Arg-165 lines the anthranilate pocket. Mg(2+)-binding residues include Asp-224 and Glu-225.

Belongs to the anthranilate phosphoribosyltransferase family. In terms of assembly, homodimer. Mg(2+) is required as a cofactor.

It carries out the reaction N-(5-phospho-beta-D-ribosyl)anthranilate + diphosphate = 5-phospho-alpha-D-ribose 1-diphosphate + anthranilate. The protein operates within amino-acid biosynthesis; L-tryptophan biosynthesis; L-tryptophan from chorismate: step 2/5. Functionally, catalyzes the transfer of the phosphoribosyl group of 5-phosphorylribose-1-pyrophosphate (PRPP) to anthranilate to yield N-(5'-phosphoribosyl)-anthranilate (PRA). This Listeria innocua serovar 6a (strain ATCC BAA-680 / CLIP 11262) protein is Anthranilate phosphoribosyltransferase.